The following is a 156-amino-acid chain: Small ribosomal subunit protein uS7 (156 aa).

Belongs to the universal ribosomal protein uS7 family. Part of the 30S ribosomal subunit. Contacts proteins S9 and S11.

Functionally, one of the primary rRNA binding proteins, it binds directly to 16S rRNA where it nucleates assembly of the head domain of the 30S subunit. Is located at the subunit interface close to the decoding center, probably blocks exit of the E-site tRNA. This chain is Small ribosomal subunit protein uS7, found in Baumannia cicadellinicola subsp. Homalodisca coagulata.